Consider the following 131-residue polypeptide: Histone H2B (131 aa).

Positions 1–19 are enriched in basic and acidic residues; sequence MAPKAEKKPASKAPAEKKP. The interval 1–38 is disordered; it reads MAPKAEKKPASKAPAEKKPAAKKTASSTDGGKKRTKAR. An N6-acetyllysine; alternate mark is found at lysine 7 and lysine 8. Glycyl lysine isopeptide (Lys-Gly) (interchain with G-Cter in SUMO); alternate cross-links involve residues lysine 7 and lysine 8. A Phosphoserine modification is found at serine 11. N6-acetyllysine is present on lysine 12. Lysine 17 carries the post-translational modification N6-acetyllysine; alternate. Lysine 17 participates in a covalent cross-link: Glycyl lysine isopeptide (Lys-Gly) (interchain with G-Cter in SUMO); alternate. Residue lysine 18 forms a Glycyl lysine isopeptide (Lys-Gly) (interchain with G-Cter in SUMO) linkage. Residue lysine 125 forms a Glycyl lysine isopeptide (Lys-Gly) (interchain with G-Cter in ubiquitin) linkage.

The protein belongs to the histone H2B family. The nucleosome is a histone octamer containing two molecules each of H2A, H2B, H3 and H4 assembled in one H3-H4 heterotetramer and two H2A-H2B heterodimers. The octamer wraps approximately 147 bp of DNA. In terms of processing, monoubiquitinated by the UBC2-BRE1 complex to form H2BK123ub1. H2BK123ub1 gives a specific tag for epigenetic transcriptional activation and is also prerequisite for H3K4me and H3K79me formation. H2BK123ub1 also modulates the formation of double-strand breaks during meiosis and is a prerequisite for DNA-damage checkpoint activation. Post-translationally, phosphorylated by STE20 to form H2BS10ph during progression through meiotic prophase. May be correlated with chromosome condensation. Acetylated by GCN5 to form H2BK11ac and H2BK16ac. H2BK16ac can also be formed by ESA1. Acetylation of N-terminal lysines and particularly formation of H2BK11acK16ac has a positive effect on transcription. In terms of processing, sumoylation to form H2BK6su or H2BK7su, and probably also H2BK16su or H2BK17su, occurs preferentially near the telomeres and represses gene transcription.

It localises to the nucleus. Its subcellular location is the chromosome. Its function is as follows. Core component of nucleosome. Nucleosomes wrap and compact DNA into chromatin, limiting DNA accessibility to the cellular machineries which require DNA as a template. Histones thereby play a central role in transcription regulation, DNA repair, DNA replication and chromosomal stability. DNA accessibility is regulated via a complex set of post-translational modifications of histones, also called histone code, and nucleosome remodeling. The chain is Histone H2B (HTB1) from Lodderomyces elongisporus (strain ATCC 11503 / CBS 2605 / JCM 1781 / NBRC 1676 / NRRL YB-4239) (Yeast).